A 99-amino-acid chain; its full sequence is CTP synthase (99 aa).

Positions 1–99 (TMVTKLEKDS…FIKAIIENNK (99 aa)) constitute a Glutamine amidotransferase type-1 domain. Arginine 28 contributes to the L-glutamine binding site. Catalysis depends on residues histidine 73 and glutamate 75.

Belongs to the CTP synthase family. Homotetramer.

It carries out the reaction UTP + L-glutamine + ATP + H2O = CTP + L-glutamate + ADP + phosphate + 2 H(+). The enzyme catalyses L-glutamine + H2O = L-glutamate + NH4(+). It catalyses the reaction UTP + NH4(+) + ATP = CTP + ADP + phosphate + 2 H(+). Its pathway is pyrimidine metabolism; CTP biosynthesis via de novo pathway; CTP from UDP: step 2/2. Its activity is regulated as follows. Allosterically activated by GTP, when glutamine is the substrate; GTP has no effect on the reaction when ammonia is the substrate. The allosteric effector GTP functions by stabilizing the protein conformation that binds the tetrahedral intermediate(s) formed during glutamine hydrolysis. Inhibited by the product CTP, via allosteric rather than competitive inhibition. Its function is as follows. Catalyzes the ATP-dependent amination of UTP to CTP with either L-glutamine or ammonia as the source of nitrogen. Regulates intracellular CTP levels through interactions with the four ribonucleotide triphosphates. The polypeptide is CTP synthase (Mycoplasma capricolum subsp. capripneumoniae).